Reading from the N-terminus, the 284-residue chain is Avenin-like b11 (284 aa).

The first 18 residues, 1–18, serve as a signal peptide directing secretion; sequence MKVFILALLALTATTAIA.

It belongs to the prolamin family. Post-translationally, contains disulfide bonds.

Its function is as follows. Seed storage protein. Might be integrated via inter-chain disulfide bonds within the glutenin polymer. This is Avenin-like b11 from Triticum aestivum (Wheat).